The sequence spans 292 residues: Ribosomal protein L11 methyltransferase (292 aa).

Residues T144, G165, D187, and N229 each coordinate S-adenosyl-L-methionine.

The protein belongs to the methyltransferase superfamily. PrmA family.

It is found in the cytoplasm. The catalysed reaction is L-lysyl-[protein] + 3 S-adenosyl-L-methionine = N(6),N(6),N(6)-trimethyl-L-lysyl-[protein] + 3 S-adenosyl-L-homocysteine + 3 H(+). In terms of biological role, methylates ribosomal protein L11. This is Ribosomal protein L11 methyltransferase from Saccharophagus degradans (strain 2-40 / ATCC 43961 / DSM 17024).